The following is a 133-amino-acid chain: T-cell receptor beta chain V region 86T1 (133 aa).

An N-terminal signal peptide occupies residues 1–21; it reads MSCRLLLYVSLCLVETALMNT. The segment at 22–113 is v segment; the sequence is KITQSPRYLI…SAVYFCASSH (92 aa). N-linked (GlcNAc...) asparagine glycosylation is found at asparagine 36 and asparagine 75. A disulfide bridge connects residues cysteine 41 and cysteine 109. The interval 114-133 is j segment; sequence GQGVSGNTLYFGEGSRLIVV.

The sequence is that of T-cell receptor beta chain V region 86T1 from Mus musculus (Mouse).